A 378-amino-acid chain; its full sequence is Chaperone protein DnaJ (378 aa).

Positions 5–70 (DFYEILGVSK…EKRSAYDRMG (66 aa)) constitute a J domain. Residues 137 to 215 (GCKKEISFTA…CHGNGVKDKS (79 aa)) form a CR-type zinc finger. Cysteine 150, cysteine 153, cysteine 167, cysteine 170, cysteine 189, cysteine 192, cysteine 203, and cysteine 206 together coordinate Zn(2+). CXXCXGXG motif repeat units lie at residues 150-157 (CDTCDGKG), 167-174 (CQTCHGQG), 189-196 (CPHCGGTG), and 203-210 (CSDCHGNG).

The protein belongs to the DnaJ family. In terms of assembly, homodimer. Zn(2+) is required as a cofactor.

It localises to the cytoplasm. Functionally, participates actively in the response to hyperosmotic and heat shock by preventing the aggregation of stress-denatured proteins and by disaggregating proteins, also in an autonomous, DnaK-independent fashion. Unfolded proteins bind initially to DnaJ; upon interaction with the DnaJ-bound protein, DnaK hydrolyzes its bound ATP, resulting in the formation of a stable complex. GrpE releases ADP from DnaK; ATP binding to DnaK triggers the release of the substrate protein, thus completing the reaction cycle. Several rounds of ATP-dependent interactions between DnaJ, DnaK and GrpE are required for fully efficient folding. Also involved, together with DnaK and GrpE, in the DNA replication of plasmids through activation of initiation proteins. The polypeptide is Chaperone protein DnaJ (Psychrobacter cryohalolentis (strain ATCC BAA-1226 / DSM 17306 / VKM B-2378 / K5)).